Consider the following 356-residue polypeptide: Peptide chain release factor 1 (356 aa).

The residue at position 235 (Gln-235) is an N5-methylglutamine.

The protein belongs to the prokaryotic/mitochondrial release factor family. In terms of processing, methylated by PrmC. Methylation increases the termination efficiency of RF1.

It localises to the cytoplasm. Its function is as follows. Peptide chain release factor 1 directs the termination of translation in response to the peptide chain termination codons UAG and UAA. In Mycobacteroides abscessus (strain ATCC 19977 / DSM 44196 / CCUG 20993 / CIP 104536 / JCM 13569 / NCTC 13031 / TMC 1543 / L948) (Mycobacterium abscessus), this protein is Peptide chain release factor 1.